Reading from the N-terminus, the 458-residue chain is Exodeoxyribonuclease 7 large subunit (458 aa).

It belongs to the XseA family. Heterooligomer composed of large and small subunits.

Its subcellular location is the cytoplasm. The catalysed reaction is Exonucleolytic cleavage in either 5'- to 3'- or 3'- to 5'-direction to yield nucleoside 5'-phosphates.. Its function is as follows. Bidirectionally degrades single-stranded DNA into large acid-insoluble oligonucleotides, which are then degraded further into small acid-soluble oligonucleotides. The polypeptide is Exodeoxyribonuclease 7 large subunit (Serratia proteamaculans (strain 568)).